The following is a 400-amino-acid chain: MHRVIFLVDMNAFFISCESTRHPEIIGKPAAVAGDPKNRSGIILTANYEARKFGVKTTMVLHKVLKLCPNIIIIPPDHCFYKQKSKEVMGILSKYTPVIEKNSIDEAWLDMTGCERIFGRSYQTAECIMKHINSELGLDCSIGISENKFLAKMASQMKKPLGITKLWKKDIELKLWPLPVEFMNGIGKQTARKLREMKIKTIGELANFDRRYLIKKLGKVGAEIHQFANGIDVSPVTPHSHKDVKSIGKSITLAHDISDIESAKVILMELSDKVGMTARKYNKKGHTVQINIKYSNFQSITRQRTITETYLVKEIYSAGIEMLEKNWNERLPVRLLGISLSGFSKYNEDEQISMFNMLEIDNEKSSVRKIDKIEAAIDSIRKKYGDSIIKSGSLIKKSKN.

A UmuC domain is found at 5 to 187 (IFLVDMNAFF…LPVEFMNGIG (183 aa)). Positions 9 and 105 each coordinate Mg(2+). Glu-106 is an active-site residue.

The protein belongs to the DNA polymerase type-Y family. Monomer. It depends on Mg(2+) as a cofactor.

Its subcellular location is the cytoplasm. It carries out the reaction DNA(n) + a 2'-deoxyribonucleoside 5'-triphosphate = DNA(n+1) + diphosphate. In terms of biological role, poorly processive, error-prone DNA polymerase involved in untargeted mutagenesis. Copies undamaged DNA at stalled replication forks, which arise in vivo from mismatched or misaligned primer ends. These misaligned primers can be extended by PolIV. Exhibits no 3'-5' exonuclease (proofreading) activity. May be involved in translesional synthesis, in conjunction with the beta clamp from PolIII. This Clostridium kluyveri (strain ATCC 8527 / DSM 555 / NBRC 12016 / NCIMB 10680 / K1) protein is DNA polymerase IV.